A 439-amino-acid chain; its full sequence is Putative myrosinase 3 (439 aa).

A signal peptide spans 1 to 19 (MKFRALGLVLLLAVETCKA). N33 carries an N-linked (GlcNAc...) asparagine glycan. A beta-D-glucoside contacts are provided by residues H145, 190–191 (NQ), and Y316. N336 carries an N-linked (GlcNAc...) asparagine glycan. A beta-D-glucoside is bound by residues E386 and W404. The Nucleophile role is filled by E386.

Belongs to the glycosyl hydrolase 1 family. As to expression, expressed specifically in stamens and petals.

It catalyses the reaction a thioglucoside + H2O = a sugar + a thiol.. The sequence is that of Putative myrosinase 3 from Arabidopsis thaliana (Mouse-ear cress).